Consider the following 245-residue polypeptide: Carbohydrate deacetylase (245 aa).

Residues His61 and His122 each contribute to the Mg(2+) site.

This sequence belongs to the YdjC deacetylase family. Mg(2+) is required as a cofactor.

Its function is as follows. Probably catalyzes the deacetylation of acetylated carbohydrates an important step in the degradation of oligosaccharides. The polypeptide is Carbohydrate deacetylase (celC) (Geobacillus stearothermophilus (Bacillus stearothermophilus)).